The chain runs to 209 residues: MENYFESPFRGITLDKQVKSPNLVVGKYSYYSGYYHGHSFEDCARYLLPDEGADRLVIGSFCSIGSGAAFIMAGNQGHRNEWISTFPFFFMPEVPEFENAANGYLPAGDTVIGNDVWIGSEAIIMPGITVGDGAVIGTRALVTKDVEPYAIVGGNPAKTIRKRFDDDSIALLLEMKWWGWPAERLKAAMPLMTSGNVAALYRFWRSDSL.

Residue histidine 78 is part of the active site.

The protein belongs to the transferase hexapeptide repeat family.

It carries out the reaction chloramphenicol + acetyl-CoA = chloramphenicol 3-acetate + CoA. Functionally, this enzyme is an effector of chloramphenicol resistance in bacteria. In Agrobacterium fabrum (strain C58 / ATCC 33970) (Agrobacterium tumefaciens (strain C58)), this protein is Chloramphenicol acetyltransferase (cat).